The chain runs to 178 residues: Caveolin-1 (178 aa).

The residue at position 2 (serine 2) is an N-acetylserine. Residue serine 2 is modified to Phosphoserine. Positions 2 to 94 (SGGKYVDSEG…WKASFTTFTV (93 aa)) are required for homooligomerization. Residues 2-104 (SGGKYVDSEG…TKYWFYRLLS (103 aa)) lie on the Cytoplasmic side of the membrane. An N6-acetyllysine; alternate modification is found at lysine 5. Residue lysine 5 forms a Glycyl lysine isopeptide (Lys-Gly) (interchain with G-Cter in ubiquitin); alternate linkage. A Phosphotyrosine modification is found at tyrosine 6. Serine 9 carries the phosphoserine modification. Tyrosine 14 carries the phosphotyrosine; by ABL1 modification. Phosphotyrosine is present on tyrosine 25. Residues lysine 26, lysine 30, lysine 39, lysine 47, and lysine 57 each participate in a glycyl lysine isopeptide (Lys-Gly) (interchain with G-Cter in ubiquitin) cross-link. Residues 82 to 94 (DGIWKASFTTFTV) form an interaction with CAVIN3 region. The helical intramembrane region spans 105–125 (SLVGIPVALIWGIYFAILSFL). The Cytoplasmic segment spans residues 126–178 (YIWAVVPCIKSFLIKIQCISRIYSICIHTFCDPLYEAIGKIFSNIRISMQKEI). Positions 131 to 142 (VPCIKSFLIKIQ) are interacts with SPRY1, SPRY2, SPRY3 and SPRY4. S-palmitoyl cysteine attachment occurs at residues cysteine 133, cysteine 143, and cysteine 156. The interacts with SPRY1, SPRY2, and SPRY4 stretch occupies residues 149–160 (SICIHTFCDPLY). The interacts with SPRY1, SPRY2, SPRY3 and SPRY4 stretch occupies residues 167 to 178 (FSNIRISMQKEI).

The protein belongs to the caveolin family. In terms of assembly, homooligomer. Interacts with GLIPR2. Interacts with NOSTRIN. Interacts with SNAP25 and STX1A. Interacts (via the N-terminus) with DPP4; the interaction is direct. Interacts with CTNNB1, CDH1 and JUP. Interacts with PACSIN2; this interaction induces membrane tubulation. Interacts with SLC7A9. Interacts with BMX and BTK. Interacts with TGFBR1. Interacts with CAVIN3 (via leucine-zipper domain) in a cholesterol-sensitive manner. Interacts with CAVIN1. Interacts with EHD2 in a cholesterol-dependent manner. Forms a ternary complex with UBXN6 and VCP; mediates CAV1 targeting to lysosomes for degradation. Interacts with ABCG1; this interaction regulates ABCG1-mediated cholesterol efflux. Interacts with NEU3; this interaction enhances NEU3 sialidase activity within caveola. Interacts (via C-terminus) with SPRY1, SPRY2 (via C-terminus), SPRY3, and SPRY4. Interacts with IGFBP5; this interaction allows trafficking of IGFBP5 from the plasma membrane to the nucleus. Post-translationally, phosphorylated at Tyr-14 by ABL1 in response to oxidative stress. In terms of processing, ubiquitinated. Undergo monoubiquitination and multi- and/or polyubiquitination. Monoubiquitination of N-terminal lysines promotes integration in a ternary complex with UBXN6 and VCP which promotes oligomeric CAV1 targeting to lysosomes for degradation. Ubiquitinated by ZNRF1; leading to degradation and modulation of the TLR4-mediated immune response.

The protein localises to the golgi apparatus membrane. Its subcellular location is the cell membrane. The protein resides in the membrane. It localises to the caveola. It is found in the membrane raft. Its function is as follows. May act as a scaffolding protein within caveolar membranes. Forms a stable heterooligomeric complex with CAV2 that targets to lipid rafts and drives caveolae formation. Mediates the recruitment of CAVIN proteins (CAVIN1/2/3/4) to the caveolae. Interacts directly with G-protein alpha subunits and can functionally regulate their activity. Involved in the costimulatory signal essential for T-cell receptor (TCR)-mediated T-cell activation. Its binding to DPP4 induces T-cell proliferation and NF-kappa-B activation in a T-cell receptor/CD3-dependent manner. Recruits CTNNB1 to caveolar membranes and may regulate CTNNB1-mediated signaling through the Wnt pathway. Negatively regulates TGFB1-mediated activation of SMAD2/3 by mediating the internalization of TGFBR1 from membrane rafts leading to its subsequent degradation. Binds 20(S)-hydroxycholesterol (20(S)-OHC). The protein is Caveolin-1 (CAV1) of Atelerix albiventris (Middle-African hedgehog).